The chain runs to 274 residues: Diaminopimelate epimerase (274 aa).

Residues Asn-11, Gln-44, and Asn-64 each coordinate substrate. The Proton donor role is filled by Cys-73. Substrate is bound by residues 74–75, Asn-157, Asn-190, and 208–209; these read GN and ER. The active-site Proton acceptor is Cys-217. 218-219 provides a ligand contact to substrate; it reads GS.

Belongs to the diaminopimelate epimerase family. As to quaternary structure, homodimer.

Its subcellular location is the cytoplasm. It carries out the reaction (2S,6S)-2,6-diaminopimelate = meso-2,6-diaminopimelate. It functions in the pathway amino-acid biosynthesis; L-lysine biosynthesis via DAP pathway; DL-2,6-diaminopimelate from LL-2,6-diaminopimelate: step 1/1. Its function is as follows. Catalyzes the stereoinversion of LL-2,6-diaminopimelate (L,L-DAP) to meso-diaminopimelate (meso-DAP), a precursor of L-lysine and an essential component of the bacterial peptidoglycan. The sequence is that of Diaminopimelate epimerase from Mannheimia succiniciproducens (strain KCTC 0769BP / MBEL55E).